Reading from the N-terminus, the 299-residue chain is Peroxisomal biogenesis factor 19 (299 aa).

The interval 1 to 63 (MAAAEGDGGV…SPGDTAKDAL (63 aa)) is disordered. Alanine 2 is modified (N-acetylalanine). The interval 2-56 (AAAEGDGGVRAEADRELEELLESALDDFDKAKPSPAPPPTTTAPDASGPQKRSPG) is docking to the peroxisome membrane and binding to PEX3. The segment at 2 to 91 (AAAEGDGGVR…QATAEFEKAM (90 aa)) is necessary for PEX19 function on peroxisome biogenesis. Acidic residues predominate over residues 16 to 27 (RELEELLESALD). Phosphoserine occurs at positions 35, 54, and 66. Threonine 236 carries the phosphothreonine modification. A Cysteine methyl ester modification is found at cysteine 296. Residue cysteine 296 is the site of S-farnesyl cysteine attachment. The propeptide at 297 to 299 (LIM) is removed in mature form.

The protein belongs to the peroxin-19 family. Interacts with a broad range of peroxisomal membrane proteins, including PEX3, PEX10, PEX11A, PEX11B, PEX12, PEX13, PEX14 and PEX16, PXMP2/PMP22, PXMP4/PMP24, SLC25A17/PMP34, ABCD1/ALDP, ABCD2/ALDRP, and ABCD3/PMP70. Also interacts with the tumor suppressor CDKN2A/p19ARF.

It localises to the cytoplasm. The protein resides in the peroxisome membrane. Functionally, necessary for early peroxisomal biogenesis. Acts both as a cytosolic chaperone and as an import receptor for peroxisomal membrane proteins (PMPs). Binds and stabilizes newly synthesized PMPs in the cytoplasm by interacting with their hydrophobic membrane-spanning domains, and targets them to the peroxisome membrane by binding to the integral membrane protein PEX3. Excludes CDKN2A from the nucleus and prevents its interaction with MDM2, which results in active degradation of TP53. This is Peroxisomal biogenesis factor 19 (PEX19) from Bos taurus (Bovine).